A 690-amino-acid chain; its full sequence is Glycine--tRNA ligase beta subunit (690 aa).

This sequence belongs to the class-II aminoacyl-tRNA synthetase family. Tetramer of two alpha and two beta subunits.

Its subcellular location is the cytoplasm. It carries out the reaction tRNA(Gly) + glycine + ATP = glycyl-tRNA(Gly) + AMP + diphosphate. The polypeptide is Glycine--tRNA ligase beta subunit (Buchnera aphidicola subsp. Acyrthosiphon pisum (strain 5A)).